Reading from the N-terminus, the 254-residue chain is Cytochrome c oxidase subunit 2 (254 aa).

Residues 1–37 (MNNILNFYPAVITTDVAENWQIGFQDPATPIMEGIIN) lie on the Mitochondrial intermembrane side of the membrane. A helical transmembrane segment spans residues 38-58 (LHYDLMFFICVISVFVSWMLG). The Mitochondrial matrix portion of the chain corresponds to 59 to 83 (RTLWHFEQNQNKIPSSLTHGTLIEM). The chain crosses the membrane as a helical span at residues 84–104 (IWTVTPAFILLIIAVPSFSLL). Residues 105–254 (YAMDEIISPA…VSWISNKLNE (150 aa)) lie on the Mitochondrial intermembrane side of the membrane. Residues His186, Cys221, Glu223, Cys225, His229, and Met232 each contribute to the Cu cation site. A Mg(2+)-binding site is contributed by Glu223.

It belongs to the cytochrome c oxidase subunit 2 family. As to quaternary structure, component of the cytochrome c oxidase (complex IV, CIV), a multisubunit enzyme composed of a catalytic core of 3 subunits and several supernumerary subunits. The complex exists as a monomer or a dimer and forms supercomplexes (SCs) in the inner mitochondrial membrane with ubiquinol-cytochrome c oxidoreductase (cytochrome b-c1 complex, complex III, CIII). Cu cation serves as cofactor.

The protein resides in the mitochondrion inner membrane. The enzyme catalyses 4 Fe(II)-[cytochrome c] + O2 + 8 H(+)(in) = 4 Fe(III)-[cytochrome c] + 2 H2O + 4 H(+)(out). Its function is as follows. Component of the cytochrome c oxidase, the last enzyme in the mitochondrial electron transport chain which drives oxidative phosphorylation. The respiratory chain contains 3 multisubunit complexes succinate dehydrogenase (complex II, CII), ubiquinol-cytochrome c oxidoreductase (cytochrome b-c1 complex, complex III, CIII) and cytochrome c oxidase (complex IV, CIV), that cooperate to transfer electrons derived from NADH and succinate to molecular oxygen, creating an electrochemical gradient over the inner membrane that drives transmembrane transport and the ATP synthase. Cytochrome c oxidase is the component of the respiratory chain that catalyzes the reduction of oxygen to water. Electrons originating from reduced cytochrome c in the intermembrane space (IMS) are transferred via the dinuclear copper A center (CU(A)) of subunit 2 and heme A of subunit 1 to the active site in subunit 1, a binuclear center (BNC) formed by heme A3 and copper B (CU(B)). The BNC reduces molecular oxygen to 2 water molecules using 4 electrons from cytochrome c in the IMS and 4 protons from the mitochondrial matrix. This Chondrus crispus (Carrageen Irish moss) protein is Cytochrome c oxidase subunit 2 (COX2).